We begin with the raw amino-acid sequence, 483 residues long: Ribulose bisphosphate carboxylase large chain (483 aa).

Positions 1–2 are excised as a propeptide; the sequence is MS. Residues asparagine 123 and threonine 173 each contribute to the substrate site. Lysine 175 (proton acceptor) is an active-site residue. Substrate is bound at residue lysine 177. Mg(2+)-binding residues include lysine 201, aspartate 203, and glutamate 204. Lysine 201 carries the post-translational modification N6-carboxylysine. A Phosphoserine modification is found at serine 208. Histidine 294 serves as the catalytic Proton acceptor. Substrate is bound by residues arginine 295 and histidine 327. Threonine 330 bears the Phosphothreonine mark. Serine 379 is a binding site for substrate.

The protein belongs to the RuBisCO large chain family. Type I subfamily. As to quaternary structure, heterohexadecamer of 8 large chains and 8 small chains; disulfide-linked. The disulfide link is formed within the large subunit homodimers. Mg(2+) serves as cofactor. Post-translationally, the disulfide bond which can form in the large chain dimeric partners within the hexadecamer appears to be associated with oxidative stress and protein turnover.

It is found in the plastid. The protein localises to the chloroplast. The enzyme catalyses 2 (2R)-3-phosphoglycerate + 2 H(+) = D-ribulose 1,5-bisphosphate + CO2 + H2O. It carries out the reaction D-ribulose 1,5-bisphosphate + O2 = 2-phosphoglycolate + (2R)-3-phosphoglycerate + 2 H(+). RuBisCO catalyzes two reactions: the carboxylation of D-ribulose 1,5-bisphosphate, the primary event in carbon dioxide fixation, as well as the oxidative fragmentation of the pentose substrate in the photorespiration process. Both reactions occur simultaneously and in competition at the same active site. This is Ribulose bisphosphate carboxylase large chain from Aethionema cordifolium (Lebanon stonecress).